An 884-amino-acid polypeptide reads, in one-letter code: DNA mismatch repair protein MutS (884 aa).

601–608 serves as a coordination point for ATP; sequence GPNMSGKS. Positions 826–845 are disordered; the sequence is ESQLSFFGGEQSSKKQDKPL.

Belongs to the DNA mismatch repair MutS family.

Its function is as follows. This protein is involved in the repair of mismatches in DNA. It is possible that it carries out the mismatch recognition step. This protein has a weak ATPase activity. In Bacillus cereus (strain ATCC 14579 / DSM 31 / CCUG 7414 / JCM 2152 / NBRC 15305 / NCIMB 9373 / NCTC 2599 / NRRL B-3711), this protein is DNA mismatch repair protein MutS.